The primary structure comprises 1277 residues: NPC intracellular cholesterol transporter 1 (1277 aa).

The first 22 residues, 1–22 (MSARGPAFGLLLLLLCPVQVFS), serve as a signal peptide directing secretion. At 23–269 (QSCVWYGECG…WRILGLDAMY (247 aa)) the chain is on the lumenal side. Disulfide bonds link Cys-25/Cys-74, Cys-31/Cys-42, Cys-63/Cys-109, Cys-75/Cys-113, Cys-97/Cys-238, Cys-100/Cys-160, Cys-177/Cys-184, Cys-227/Cys-243, and Cys-240/Cys-247. Asn-41 is a binding site for cholesterol. Residue Asn-70 is glycosylated (N-linked (GlcNAc...) asparagine). A cholesterol-binding site is contributed by Gln-79. Asn-122 and Asn-135 each carry an N-linked (GlcNAc...) asparagine glycan. An important for cholesterol binding and cholesterol transfer from NPC1 to liposomes region spans residues 175 to 205 (LLCGREAQACNATNWIEYMFNKDNGQAPFTI). Residues Asn-185 and Asn-222 are each glycosylated (N-linked (GlcNAc...) asparagine). A helical membrane pass occupies residues 270–290 (VIMWSSYMAFLIVFFGAFFAV). Residues 291–350 (WCYRKRYFVSEYTPIDGNIAFSVNSSDKGQAFCCDPLGAAFERGLRRLFAQWGAFCVRHP) are Cytoplasmic-facing. The helical transmembrane segment at 351-371 (GCVVFFSLAFIVACSSGLVFI) threads the bilayer. At 372–621 (RVTTDPVDLW…ELNRESNSDL (250 aa)) the chain is on the lumenal side. Asn-415, Asn-452, Asn-459, and Asn-478 each carry an N-linked (GlcNAc...) asparagine glycan. 2 disulfide bridges follow: Cys-468-Cys-479 and Cys-516-Cys-533. Residues 620-785 (DLFTILISYA…ITCFVSLLGL (166 aa)) form the SSD domain. A helical transmembrane segment spans residues 622–642 (FTILISYAIMFLYISIALGHI). Residues 643–653 (KSCSRLLVDSK) lie on the Cytoplasmic side of the membrane. Residues 654-674 (ISLGIAGILIVLSSVACSLGI) form a helical membrane-spanning segment. The Lumenal segment spans residues 675 to 677 (FSY). A helical membrane pass occupies residues 678-698 (IGVPLTLIVIEVIPFLVLAVG). At 699–734 (VDNIFILVQTYQRDERLQGETLDQQLGRVLGEVAPS) the chain is on the cytoplasmic side. The chain crosses the membrane as a helical span at residues 735-755 (MFLSSFSETVAFFLGGLSVVP). Topologically, residues 756–759 (AVHT) are lumenal. A helical membrane pass occupies residues 760 to 780 (FSLFAGMAVLIDFLLQITCFV). Residues 781–832 (SLLGLDIKRQEKNRLDVVCCVQGAEDGAGVQASESCLFRFFKNSYAPLLLKD) lie on the Cytoplasmic side of the membrane. Residues 833-853 (WMRPIVIAVFVGVLSFSIAVL) form a helical membrane-spanning segment. Residues 854–1097 (NKVEIGLDQS…EQYLTVIDDT (244 aa)) lie on the Lumenal side of the membrane. N-linked (GlcNAc...) asparagine glycosylation occurs at Asn-898. Cys-909 and Cys-914 form a disulfide bridge. Asn-916, Asn-931, Asn-961, Asn-968, Asn-1028, and Asn-1063 each carry an N-linked (GlcNAc...) asparagine glycan. Intrachain disulfides connect Cys-956-Cys-1011, Cys-957-Cys-979, and Cys-967-Cys-976. Residues 1098–1118 (IFNLGVSLGAIFLVTVVLMGC) traverse the membrane as a helical segment. At 1119–1123 (ELWAT) the chain is on the cytoplasmic side. A helical transmembrane segment spans residues 1124–1144 (VIMCVTIAMILVNMFGVMWLW). A topological domain (lumenal) is located at residue Gly-1145. A helical membrane pass occupies residues 1146 to 1166 (ISLNAVSLVNLVMSCGISVEF). Over 1167–1194 (CSHITRAFTLSTKGSRVDRAEEALAHMG) the chain is Cytoplasmic. Residues 1195-1215 (SSVFSGITLTKFGGIVVLAFA) form a helical membrane-spanning segment. The Lumenal segment spans residues 1216-1226 (KSQIFQIFYFR). The helical transmembrane segment at 1227–1247 (MYLAIVLLGATHGLIFLPVLL) threads the bilayer. The Cytoplasmic segment spans residues 1248–1277 (SYIGPSINKAKSLATQERYKGTEREQLLNF). Residues 1274-1277 (LLNF) are required for location in lysosomes. The Di-leucine motif motif lies at 1274-1277 (LLNF).

Belongs to the patched family. In terms of assembly, interacts (via the second lumenal domain) with NPC2. Interacts with TMEM97; the interaction may decrease NPC1 availability to the cell. Interacts with TIM1. Interacts with SLC38A9; this interaction inhibits cholesterol-mediated mTORC1 activation via its sterol transport activity. In terms of processing, N-glycosylated. As to expression, detected in corpus luteum, granulosa cells and adrenal gland.

It is found in the late endosome membrane. The protein localises to the lysosome membrane. The enzyme catalyses cholesterol(in) = cholesterol(out). Intracellular cholesterol transporter which acts in concert with NPC2 and plays an important role in the egress of cholesterol from the endosomal/lysosomal compartment. Unesterified cholesterol that has been released from LDLs in the lumen of the late endosomes/lysosomes is transferred by NPC2 to the cholesterol-binding pocket in the N-terminal domain of NPC1. Cholesterol binds to NPC1 with the hydroxyl group buried in the binding pocket. Binds oxysterol with higher affinity than cholesterol. May play a role in vesicular trafficking in glia, a process that may be crucial for maintaining the structural and functional integrity of nerve terminals. Inhibits cholesterol-mediated mTORC1 activation throught its interaction with SLC38A9. The sequence is that of NPC intracellular cholesterol transporter 1 from Sus scrofa (Pig).